Reading from the N-terminus, the 97-residue chain is Large ribosomal subunit protein uL23 (97 aa).

This sequence belongs to the universal ribosomal protein uL23 family. Part of the 50S ribosomal subunit. Contacts protein L29, and trigger factor when it is bound to the ribosome.

In terms of biological role, one of the early assembly proteins it binds 23S rRNA. One of the proteins that surrounds the polypeptide exit tunnel on the outside of the ribosome. Forms the main docking site for trigger factor binding to the ribosome. This is Large ribosomal subunit protein uL23 from Limosilactobacillus fermentum (strain NBRC 3956 / LMG 18251) (Lactobacillus fermentum).